Here is a 1197-residue protein sequence, read N- to C-terminus: Envelopment polyprotein (1197 aa).

Residues 1–16 (MYVLLTILTSVLVCEA) form the signal peptide. Residues 17–130 (IIRVSLSSTR…RDAKQIGRKT (114 aa)) are Cytoplasmic-facing. Positions 131–153 (MAGIAMTVLPALAVFALAPVVFA) are internal signal sequence for glycoprotein N. The Lumenal segment spans residues 154-582 (EDPHLRNRPG…GLINYQCHTA (429 aa)). Intrachain disulfides connect Cys-179–Cys-188, Cys-229–Cys-239, Cys-250–Cys-281, Cys-271–Cys-284, Cys-304–Cys-456, Cys-322–Cys-332, Cys-374–Cys-434, Cys-402–Cys-413, Cys-420–Cys-425, Cys-479–Cys-482, Cys-486–Cys-556, and Cys-506–Cys-511. The helical transmembrane segment at 583-603 (LSAFVVVFVFSSIAIICLAIL) threads the bilayer. Topologically, residues 604–673 (YRVLKCLKIA…APIPRHAPIP (70 aa)) are cytoplasmic. A golgi retention signal region spans residues 608-650 (KCLKIAPRKVLNPLMWITAFIRWIYKKMVARVADNINQVNREI). Positions 646–650 (VNREI) are important for correct targeting of the glycoproteins to the Golgi complex but not for heterodimerization. Residues 675–690 (YSTYLMLLLIVSYASA) are internal signal sequence for glycoprotein C. Intrachain disulfides connect Cys-691/Cys-731, Cys-704/Cys-713, Cys-756/Cys-852, Cys-771/Cys-965, Cys-777/Cys-825, Cys-783/Cys-832, Cys-788/Cys-814, Cys-818/Cys-823, Cys-934/Cys-947, Cys-1029/Cys-1101, Cys-1039/Cys-1042, and Cys-1049/Cys-1083. Over 691–1159 (CSELIQASSR…MSWFGGPLKT (469 aa)) the chain is Lumenal. The tract at residues 777 to 783 (CHLVGEC) is fusion loop. N-linked (GlcNAc...) asparagine; by host glycosylation occurs at Asn-794. The fusion loop stretch occupies residues 819 to 830 (GGWGCGCFNVNP). Asn-1035 carries an N-linked (GlcNAc...) asparagine; by host glycan. N-linked (GlcNAc...) asparagine; by host glycosylation is present at Asn-1077. The helical transmembrane segment at 1160–1180 (ILLICLYVALSIGLFFLLIYL) threads the bilayer. At 1181 to 1197 (GGTGLSKMWLAATKKAS) the chain is on the cytoplasmic side.

This sequence belongs to the phlebovirus envelope glycoprotein family. In terms of assembly, heterodimer with glycoprotein C. Homotrimer (postfusion). Interacts with nucleocapsid protein N and with the polymerase L in order to package them into virus particles. Interacts with host E3 ubiquitin-protein ligase UBR4; this interaction is important for viral RNA production. Interacts with host LRP1; this interaction facilitates virus entry into the host cell. As to quaternary structure, heterodimer with glycoprotein C. Specific enzymatic cleavages in vivo yield mature proteins including NSm protein, Glycoprotein C, and Glycoprotein N. In terms of processing, glycosylated. The glycans can attach to host CD209/DC-SIGN, and may play a role in virus entry into dendritic cells. Post-translationally, palmitoylated.

Its subcellular location is the virion membrane. The protein localises to the host Golgi apparatus membrane. It is found in the host endoplasmic reticulum membrane. It localises to the host mitochondrion outer membrane. The protein resides in the host Golgi apparatus. Its subcellular location is the virion. Structural component of the virion that interacts with glycoprotein C. It shields the hydrophobic fusion loops of the glycoprotein C, preventing premature fusion. The glycoprotein protrusions are arranged on an icosahedral lattice, with T=12 triangulation. They are able to attach the virion to the host cell receptor CD209/DC-SIGN and to promote fusion of membranes with the late endosome after endocytosis of the virion. Plays a role in the packaging of ribonucleoproteins and polymerase during virus assembly. Functionally, structural component of the virion that interacts with glycoprotein N. Acts as a class II fusion protein that is activated upon acidification and subsequent repositioning of the glycoprotein N. The glycoprotein protrusions are arranged on an icosahedral lattice, with T=12 triangulation. They are able to attach the virion to the host cell receptor CD209/DC-SIGN and to promote fusion of membranes with the late endosome after endocytosis of the virion. In terms of biological role, plays a role in the inhibition of virus-induced apoptosis. Plays a role for virus dissemination in vertebrates. Its function is as follows. Plays a role for virus dissemination in mosquitoes. May act as a structural virion protein in insects. The protein is Envelopment polyprotein (GP) of Rift valley fever virus (strain ZH-548 M12) (RVFV).